Here is a 200-residue protein sequence, read N- to C-terminus: Ribonuclease HII (200 aa).

One can recognise an RNase H type-2 domain in the interval 14 to 200 (SRLAGVDEVG…FAPVKQWQLL (187 aa)). A divalent metal cation contacts are provided by aspartate 20, glutamate 21, and aspartate 112.

Belongs to the RNase HII family. Mn(2+) is required as a cofactor. The cofactor is Mg(2+).

The protein resides in the cytoplasm. It carries out the reaction Endonucleolytic cleavage to 5'-phosphomonoester.. Its function is as follows. Endonuclease that specifically degrades the RNA of RNA-DNA hybrids. The chain is Ribonuclease HII from Chromohalobacter salexigens (strain ATCC BAA-138 / DSM 3043 / CIP 106854 / NCIMB 13768 / 1H11).